A 102-amino-acid chain; its full sequence is Small ribosomal subunit protein uS10 (102 aa).

Belongs to the universal ribosomal protein uS10 family. As to quaternary structure, part of the 30S ribosomal subunit.

Functionally, involved in the binding of tRNA to the ribosomes. This is Small ribosomal subunit protein uS10 from Methylorubrum populi (strain ATCC BAA-705 / NCIMB 13946 / BJ001) (Methylobacterium populi).